The primary structure comprises 261 residues: Ribonuclease HII (261 aa).

The 190-residue stretch at 71 to 260 (HYIAGVDEVG…LHKYRHNTLL (190 aa)) folds into the RNase H type-2 domain. Residues Asp-77, Glu-78, and Asp-169 each coordinate a divalent metal cation.

Belongs to the RNase HII family. The cofactor is Mn(2+). Mg(2+) serves as cofactor.

It is found in the cytoplasm. It catalyses the reaction Endonucleolytic cleavage to 5'-phosphomonoester.. In terms of biological role, endonuclease that specifically degrades the RNA of RNA-DNA hybrids. This chain is Ribonuclease HII, found in Oceanobacillus iheyensis (strain DSM 14371 / CIP 107618 / JCM 11309 / KCTC 3954 / HTE831).